A 258-amino-acid polypeptide reads, in one-letter code: 2S seed storage albumin protein (258 aa).

An N-terminal signal peptide occupies residues 1-24; sequence MAKLIPTIALVSVLLFIIANASFA. A propeptide spanning residues 25–35 is cleaved from the precursor; the sequence is YRTTITTIEID. 4 disulfide bridges follow: Cys49–Cys108, Cys61–Cys97, Cys98–Cys145, and Cys110–Cys149. A disordered region spans residues 64 to 87; sequence YLRQSSSRRSPGEEVLRMPGDENQ. Ser69 is subject to Phosphoserine. Residues 73 to 83 are compositionally biased toward basic and acidic residues; the sequence is SPGEEVLRMPG. The propeptide occupies 77–86; sequence EVLRMPGDEN. Pyrrolidone carboxylic acid is present on Gln87. 2 consecutive propeptides follow at residues 154 to 156 and 191 to 193; these read RTN and SDN. 4 disulfides stabilise this stretch: Cys162–Cys212, Cys175–Cys201, Cys202–Cys249, and Cys214–Cys256. A Pyrrolidone carboxylic acid modification is found at Gln194.

This sequence belongs to the 2S seed storage albumins family. The 2 mature proteins consist of heterodimers of a small and a large chain; disulfide-linked. In terms of processing, the N-terminus of both large chains is blocked. Post-translationally, the C-terminus of the allergen Ric c 1 and allergen Ric c 3 small chains are heterogeneous and the length of the chains can vary from 33 to 36 amino acids and from 36 to 40 amino acids respectively.

2S seed storage proteins. The chain is 2S seed storage albumin protein from Ricinus communis (Castor bean).